A 323-amino-acid chain; its full sequence is MESKSLRELWEETEKLKDSSSTDEKTRSEIVEGYEKCLKLVLQLRIFSSNEEVDEIKTSELRYLMIDYELAKCVEQWTKGDRLKAVQYAKTHYETFLSICDDYGLKPMQDEKPKTEADTRTLKIARYRMRQNLEKELKALSKDSETNEEQERKFWLTKLQIAVEDTLDSLPHIEMEIDLLKRAQAELMKSEDSPEKDEETLRREERKQKEGSSWRLDLNTRDKILDKNNRPLQPFTIVSDRNETRKNVFGFGYNLPTMTVDEYLDEEMKRGNIISQKDNPPKSDSDDEDDYEKLDAKTMKDRYWDEFKEANPRGSGNTMVNRG.

Disordered regions lie at residues 185–214 (AELM…GSSW) and 271–294 (GNII…YEKL).

The protein belongs to the IGBP1/TAP42 family.

This is an uncharacterized protein from Schizosaccharomyces pombe (strain 972 / ATCC 24843) (Fission yeast).